A 379-amino-acid polypeptide reads, in one-letter code: Armadillo repeat-containing X-linked protein 3 (379 aa).

At 1-6 (MGYARK) the chain is on the mitochondrial intermembrane side. 2 mitochondrion outer membrane (MOM)-targeting sequence regions span residues 1-6 (MGYARK) and 26-37 (RLTRGRKQNKEK). Residues 7–29 (VGWVTAGLVIGAGACYCIYRLTR) traverse the membrane as a helical; Signal-anchor segment. Residues 30–379 (GRKQNKEKMA…AEHMFPKSQE (350 aa)) lie on the Cytoplasmic side of the membrane. A phosphoserine mark is found at Ser-61, Ser-67, and Ser-72. Positions 89 to 98 (RARARARARA) are nuclear localization signal. Ser-110 bears the Phosphoserine mark. 3 ARM repeats span residues 111–151 (PNSD…NNAA), 153–192 (AFNR…NLSV), and 233–272 (VTNE…NLAE).

Belongs to the eutherian X-chromosome-specific Armcx family. In terms of assembly, interacts (via ARM domain) with MIRO1, MIRO2 and TRAK2. The interaction with Miro is calcium-dependent. Interacts with SOX10.

It is found in the mitochondrion outer membrane. Its subcellular location is the cytoplasm. The protein localises to the nucleus. In terms of biological role, regulates mitochondrial aggregation and transport in axons in living neurons. May link mitochondria to the TRAK2-kinesin motor complex via its interaction with Miro and TRAK2. Mitochondrial distribution and dynamics is regulated through ARMCX3 protein degradation, which is promoted by PCK and negatively regulated by WNT1. Enhances the SOX10-mediated transactivation of the neuronal acetylcholine receptor subunit alpha-3 and beta-4 subunit gene promoters. The polypeptide is Armadillo repeat-containing X-linked protein 3 (ARMCX3) (Pongo abelii (Sumatran orangutan)).